Reading from the N-terminus, the 288-residue chain is Phenazine biosynthesis-like domain-containing protein 1 (288 aa).

Residue Glu-46 is part of the active site.

The protein belongs to the PhzF family.

The protein is Phenazine biosynthesis-like domain-containing protein 1 (Pbld1) of Mus musculus (Mouse).